We begin with the raw amino-acid sequence, 381 residues long: Beta-lactamase (381 aa).

Positions 1 to 20 (MMKKSICCALLLTASFSTFA) are cleaved as a signal peptide. The active-site Acyl-ester intermediate is S84. The active-site Proton acceptor is Y170. 335 to 337 (KTG) is a binding site for substrate.

It belongs to the class-C beta-lactamase family.

Its subcellular location is the periplasm. The enzyme catalyses a beta-lactam + H2O = a substituted beta-amino acid. Sulbactam is an effective progressive inhibitor but a poor competitive inhibitor. This protein is a serine beta-lactamase with a substrate specificity for cephalosporins. The polypeptide is Beta-lactamase (ampC) (Citrobacter freundii).